The sequence spans 134 residues: ATP synthase epsilon chain (134 aa).

The protein belongs to the ATPase epsilon chain family. As to quaternary structure, F-type ATPases have 2 components, CF(1) - the catalytic core - and CF(0) - the membrane proton channel. CF(1) has five subunits: alpha(3), beta(3), gamma(1), delta(1), epsilon(1). CF(0) has three main subunits: a, b and c.

The protein localises to the cell membrane. Functionally, produces ATP from ADP in the presence of a proton gradient across the membrane. The polypeptide is ATP synthase epsilon chain (Alkaliphilus metalliredigens (strain QYMF)).